The primary structure comprises 332 residues: MVRVAINGFGRIGRLVMRIALQRKNVEVVALNDPFISNDYSAYMFKYDSTHGRYAGEVSHDDKHIIVDGHKIATFQERDPANLPWASLNIDIAIDSTGVFKELDTAQKHIDAGAKKVVITAPSSTAPMFVMGVNEEKYTSDLKIVSNASCTTNCLAPLAKVINDAFGIEEGLMTTVHSMTATQKTVDGPSHKDWRGGRTASGNIIPSSTGAAKAVGKVLPELQGKLTGMAFRVPTVDVSVVDLTVKLNKETTYDEIKKVVKAAAEGKLKGVLGYTEDAVVSSDFLGDSNSSIFDAAAGIQLSPKFVKLVSWYDNEYGYSTRVVDLVEHVAKA.

3 residues coordinate NAD(+): R11, I12, and D33. Residues K46 and K63 each participate in a glycyl lysine isopeptide (Lys-Gly) (interchain with G-Cter in ubiquitin) cross-link. T120 serves as a coordination point for NAD(+). Residues 149–151, T180, 209–210, and R232 each bind D-glyceraldehyde 3-phosphate; these read SCT and TG. The Nucleophile role is filled by C150. Phosphoserine is present on S302. NAD(+) is bound by residues N314 and Y318.

It belongs to the glyceraldehyde-3-phosphate dehydrogenase family. Homotetramer.

Its subcellular location is the cytoplasm. It catalyses the reaction D-glyceraldehyde 3-phosphate + phosphate + NAD(+) = (2R)-3-phospho-glyceroyl phosphate + NADH + H(+). It carries out the reaction NADH + H2O = (6R)-NADHX. The catalysed reaction is NADH + H2O = (6S)-NADHX. The enzyme catalyses NADPH + H2O = (6R)-NADPHX. It catalyses the reaction NADPH + H2O = (6S)-NADPHX. It participates in carbohydrate degradation; glycolysis; pyruvate from D-glyceraldehyde 3-phosphate: step 1/5. Glyceraldehyde-3-phosphate dehydrogenase (GAPDH) involved in glycolysis and gluconeogenesis. Catalyzes the reaction of glyceraldehyde-3-phosphate to 1,3 bis-phosphoglycerate. The contribution of the TDH1, TDH2, and TDH3 to the total glyceraldehyde-3-phosphate dehydrogenase activity is 10-15, 25-30, and 50-60%, respectively. Its function is as follows. As a side activity, catalyzes the hydration of the nicotinamide ring of NADH or NADPH at the C6 position to give the corresponding hydrates, NADHX and NADPHX, which exist as R and S epimers, that cannot act as electron donors or acceptors and inhibit several dehydrogenases, making them toxic. The chain is Glyceraldehyde-3-phosphate dehydrogenase 2 from Saccharomyces cerevisiae (strain ATCC 204508 / S288c) (Baker's yeast).